A 698-amino-acid chain; its full sequence is Elongation factor G 1 (698 aa).

In terms of domain architecture, tr-type G spans 8–290 (ERYRNIGIVA…AVVDYLPAPI (283 aa)). GTP contacts are provided by residues 17–24 (AHVDAGKT), 88–92 (DTPGH), and 142–145 (NKMD).

The protein belongs to the TRAFAC class translation factor GTPase superfamily. Classic translation factor GTPase family. EF-G/EF-2 subfamily.

The protein resides in the cytoplasm. Functionally, catalyzes the GTP-dependent ribosomal translocation step during translation elongation. During this step, the ribosome changes from the pre-translocational (PRE) to the post-translocational (POST) state as the newly formed A-site-bound peptidyl-tRNA and P-site-bound deacylated tRNA move to the P and E sites, respectively. Catalyzes the coordinated movement of the two tRNA molecules, the mRNA and conformational changes in the ribosome. The chain is Elongation factor G 1 from Shewanella denitrificans (strain OS217 / ATCC BAA-1090 / DSM 15013).